Consider the following 119-residue polypeptide: MTRVPRGYIARRRRTKMRSFASNFRGAHLRLNRMITQQVKRAFVSSHRDRGRQKRDFRRLWITRINAATRIFKVFDSYSKLIHNLYKKKLILNRKMLAQVAVSNPNNLYTISKKIKIIN.

It belongs to the bacterial ribosomal protein bL20 family.

The protein resides in the plastid. It is found in the chloroplast. Binds directly to 23S ribosomal RNA and is necessary for the in vitro assembly process of the 50S ribosomal subunit. It is not involved in the protein synthesizing functions of that subunit. This chain is Large ribosomal subunit protein bL20c, found in Brachypodium distachyon (Purple false brome).